Reading from the N-terminus, the 604-residue chain is MFSSLMLVSLLVLTLPIMLSIFNTYKNSTFPHHVKNTISYAFITSLIPTMMFIHSGQETIISNWHWMTMQTLKLSLSFKLDYFSMIFVPVALFVTWSIMEFSLWYMHSDPYITRFFKYLLTFLITMMILVTANNLFQLFIGWEGVGIMSFLLIGWWYGRTDANTAALQAILYNRIGDIGFIMAMAWFLFNTNTWDLQQIFMLDPNLTNLPLLGLLLAATGKSAQFGLHPWLPSAMEGPTPVSALLHSSTMVVAGVFLLIRFHPLMENNKTIQSLTLCLGAITTLFTAICALTQNDIKKIIAFSTSSQLGLMIVTIGINQPYLAFLHICTHAFFKAMLFMCSGSIIHSLNDEQDIRKMGGLFNAMPFTTTSLIIGSLALTGIPFLTGFYSKDLIIETANTSYTNAWALLMTLIATSLTAVYSTRIIFFALLGQPRFLPLTSINENNPFLINSIKRLLIGSIFAGFFISNNIYPTTVPEMTMPTYMKLTALAVTILGFTLALELSLMTHNLKLEHSTNVFKFSNLLGYYPTIMHRLPPLANLSMSQKSASLLLDSIWLENILPKSISQFQMKTSILISTQKGQIKLYFLSFLITLTLSMLLFNLHE.

A run of 16 helical transmembrane segments spans residues 2 to 22 (FSSLMLVSLLVLTLPIMLSIF), 41 to 61 (AFITSLIPTMMFIHSGQETII), 85 to 105 (MIFVPVALFVTWSIMEFSLWY), 115 to 135 (FFKYLLTFLITMMILVTANNL), 138 to 158 (LFIGWEGVGIMSFLLIGWWYG), 169 to 189 (AILYNRIGDIGFIMAMAWFLF), 209 to 231 (LPLLGLLLAATGKSAQFGLHPWL), 239 to 259 (TPVSALLHSSTMVVAGVFLLI), 271 to 291 (IQSLTLCLGAITTLFTAICAL), 299 to 318 (IIAFSTSSQLGLMIVTIGIN), 323 to 345 (AFLHICTHAFFKAMLFMCSGSII), 364 to 384 (MPFTTTSLIIGSLALTGIPFL), 411 to 431 (LIATSLTAVYSTRIIFFALLG), 455 to 475 (LLIGSIFAGFFISNNIYPTTV), 486 to 506 (LTALAVTILGFTLALELSLMT), and 582 to 602 (IKLYFLSFLITLTLSMLLFNL).

The protein belongs to the complex I subunit 5 family. Core subunit of respiratory chain NADH dehydrogenase (Complex I) which is composed of 45 different subunits.

The protein localises to the mitochondrion inner membrane. It catalyses the reaction a ubiquinone + NADH + 5 H(+)(in) = a ubiquinol + NAD(+) + 4 H(+)(out). In terms of biological role, core subunit of the mitochondrial membrane respiratory chain NADH dehydrogenase (Complex I) which catalyzes electron transfer from NADH through the respiratory chain, using ubiquinone as an electron acceptor. Essential for the catalytic activity and assembly of complex I. In Equus caballus (Horse), this protein is NADH-ubiquinone oxidoreductase chain 5 (MT-ND5).